A 427-amino-acid chain; its full sequence is MGRFKGENRSQARWIMGGVSKGRGSGKSRKPRQAAFGQTGARVCPSSPQQDAVPRFRWPGDAECASSTHTPTMSGCKLPMGLCPDMCPAAERARRERERRLHRLEVEPGGRGNAPRADPKRTVKEYSRPAAGKPRPPPSLLRPPPVLLATVRYLAGEVAGRGDVSCAEVASFVADRLRAVRLDLSLQGVDDADAATVLEAALATLLAVVARVRPEETRGAADPVLLQTQVQEGFGSLRRCYARGKGPYPRQAAFQGLFLLYNLGSVEALQEVLQLPAALRACPPLQAALAVDAAFREDNHARLFRLLRTLPYLQSCAVQEHIGYARRKALARLSRALSTPKGQTLPLDFIEHFLALDGLQEARDLCQAHGLTLDKDRVVFLRGQYSEEGLPPPGAYHILVGNKLQGHTLEDVVMAEEGDIHRPGSAA.

Composition is skewed to basic and acidic residues over residues 1 to 10 (MGRFKGENRS) and 117 to 127 (ADPKRTVKEYS). Disordered stretches follow at residues 1-53 (MGRF…QDAV) and 101-143 (LHRL…LLRP). The segment covering 134–143 (PRPPPSLLRP) has biased composition (pro residues). The PCI domain occupies 229 to 397 (QVQEGFGSLR…EGLPPPGAYH (169 aa)). Serine 425 is modified (phosphoserine).

Belongs to the SAC3 family. May be part of a SEM1-containing complex. In terms of tissue distribution, present in spleen cells (at protein level).

Its subcellular location is the cytoplasm. It is found in the cytoskeleton. It localises to the microtubule organizing center. The protein resides in the centrosome. The protein localises to the spindle. Involved in centrosome duplication and mitotic progression. The protein is SAC3 domain-containing protein 1 (Sac3d1) of Mus musculus (Mouse).